The sequence spans 183 residues: Shikimate kinase (183 aa).

25–30 (GAGKTT) is an ATP binding site. A Mg(2+)-binding site is contributed by T29. Substrate is bound by residues D47, R71, and G93. R131 lines the ATP pocket. Position 150 (R150) interacts with substrate.

Belongs to the shikimate kinase family. Monomer. The cofactor is Mg(2+).

The protein localises to the cytoplasm. The catalysed reaction is shikimate + ATP = 3-phosphoshikimate + ADP + H(+). The protein operates within metabolic intermediate biosynthesis; chorismate biosynthesis; chorismate from D-erythrose 4-phosphate and phosphoenolpyruvate: step 5/7. In terms of biological role, catalyzes the specific phosphorylation of the 3-hydroxyl group of shikimic acid using ATP as a cosubstrate. In Dechloromonas aromatica (strain RCB), this protein is Shikimate kinase.